Consider the following 292-residue polypeptide: ATP synthase gamma chain (292 aa).

This sequence belongs to the ATPase gamma chain family. F-type ATPases have 2 components, CF(1) - the catalytic core - and CF(0) - the membrane proton channel. CF(1) has five subunits: alpha(3), beta(3), gamma(1), delta(1), epsilon(1). CF(0) has three main subunits: a, b and c.

Its subcellular location is the cell inner membrane. Its function is as follows. Produces ATP from ADP in the presence of a proton gradient across the membrane. The gamma chain is believed to be important in regulating ATPase activity and the flow of protons through the CF(0) complex. The polypeptide is ATP synthase gamma chain (Brucella abortus (strain S19)).